A 597-amino-acid polypeptide reads, in one-letter code: ATP-dependent lipid A-core flippase (597 aa).

A run of 6 helical transmembrane segments spans residues 26-46 (WIFA…TGLA), 65-85 (IQII…ANFI), 144-164 (ILTI…MAYL), 166-186 (GLLT…IWWV), 250-270 (AISQ…VIHL), and 276-296 (MLAQ…MLLL). In terms of domain architecture, ABC transmembrane type-1 spans 29–311 (AASIITMAIY…LTKINGTLQR (283 aa)). The ABC transporter domain maps to 343–579 (IRFEHLSFCY…ESHYAGLYRL (237 aa)). An ATP-binding site is contributed by 377–384 (GHSGSGKS).

The protein belongs to the ABC transporter superfamily. Lipid exporter (TC 3.A.1.106) family. Homodimer.

It is found in the cell inner membrane. The enzyme catalyses ATP + H2O + lipid A-core oligosaccharideSide 1 = ADP + phosphate + lipid A-core oligosaccharideSide 2.. Its function is as follows. Involved in lipopolysaccharide (LPS) biosynthesis. Translocates lipid A-core from the inner to the outer leaflet of the inner membrane. Transmembrane domains (TMD) form a pore in the inner membrane and the ATP-binding domain (NBD) is responsible for energy generation. This chain is ATP-dependent lipid A-core flippase, found in Nitrosococcus oceani (strain ATCC 19707 / BCRC 17464 / JCM 30415 / NCIMB 11848 / C-107).